The following is a 509-amino-acid chain: Protein OS-9 homolog (509 aa).

The N-terminal stretch at 1–23 (MRRQSRIVASLLVLACASSGAFA) is a signal peptide. Over residues 64 to 74 (SPDLNDISEQT) the composition is skewed to polar residues. The tract at residues 64-91 (SPDLNDISEQTPLKDESEESIRDGSSGE) is disordered. A compositionally biased stretch (basic and acidic residues) spans 75-91 (PLKDESEESIRDGSSGE). N120 is a glycosylation site (N-linked (GlcNAc...) asparagine). An MRH domain is found at 151-291 (GKCLYYISGW…LIYTPRLCND (141 aa)). The cysteines at positions 153 and 166 are disulfide-linked. A mannooligosaccharide derivative is bound by residues W160, W161, Q173, D246, R252, E273, and Y279. 2 disulfide bridges follow: C245–C277 and C260–C289. The segment at 433–509 (GVVDTDEDEE…GSEEIFKDEL (77 aa)) is disordered. Residues 436-451 (DTDEDEEDGYENEEGE) show a composition bias toward acidic residues. Positions 452 to 461 (TDKREQRENT) are enriched in basic and acidic residues. Residues 489–502 (RSEDGEDPDVDGSE) are compositionally biased toward acidic residues. A Prevents secretion from ER motif is present at residues 506 to 509 (KDEL).

This sequence belongs to the OS-9 family. As to quaternary structure, interacts with missfolded ER lumenal proteins.

It localises to the endoplasmic reticulum membrane. Functionally, lectin involved in the quality control of the secretory pathway. As a member of the endoplasmic reticulum-associated degradation lumenal (ERAD-L) surveillance system, targets misfolded endoplasmic reticulum lumenal glycoproteins for degradation. The sequence is that of Protein OS-9 homolog (yos9) from Emericella nidulans (strain FGSC A4 / ATCC 38163 / CBS 112.46 / NRRL 194 / M139) (Aspergillus nidulans).